We begin with the raw amino-acid sequence, 192 residues long: Phosphoheptose isomerase (192 aa).

The SIS domain occupies 35–192; sequence LIETLENQGK…CIERHFAHKN (158 aa). 50 to 52 lines the substrate pocket; that stretch reads NGG. His-59 and Glu-63 together coordinate Zn(2+). Residues Glu-63, 92–93, 118–120, Ser-123, and Gln-170 contribute to the substrate site; these read ND and STS. Gln-170 and His-178 together coordinate Zn(2+).

The protein belongs to the SIS family. GmhA subfamily. Homotetramer. It depends on Zn(2+) as a cofactor.

Its subcellular location is the cytoplasm. The catalysed reaction is 2 D-sedoheptulose 7-phosphate = D-glycero-alpha-D-manno-heptose 7-phosphate + D-glycero-beta-D-manno-heptose 7-phosphate. Its pathway is carbohydrate biosynthesis; D-glycero-D-manno-heptose 7-phosphate biosynthesis; D-glycero-alpha-D-manno-heptose 7-phosphate and D-glycero-beta-D-manno-heptose 7-phosphate from sedoheptulose 7-phosphate: step 1/1. Catalyzes the isomerization of sedoheptulose 7-phosphate in D-glycero-D-manno-heptose 7-phosphate. The chain is Phosphoheptose isomerase from Helicobacter pylori (strain HPAG1).